A 418-amino-acid polypeptide reads, in one-letter code: Tyrosine--tRNA ligase (418 aa).

Tyr34 provides a ligand contact to L-tyrosine. Residues 39 to 48 (PTGDSMHIGH) carry the 'HIGH' region motif. 2 residues coordinate L-tyrosine: Tyr166 and Gln170. The 'KMSKS' region motif lies at 228–232 (KFGKT). Residue Lys231 participates in ATP binding. Positions 350–417 (TNIVELLTET…KKNYFLAKVK (68 aa)) constitute an S4 RNA-binding domain.

Belongs to the class-I aminoacyl-tRNA synthetase family. TyrS type 1 subfamily. In terms of assembly, homodimer.

Its subcellular location is the cytoplasm. The catalysed reaction is tRNA(Tyr) + L-tyrosine + ATP = L-tyrosyl-tRNA(Tyr) + AMP + diphosphate + H(+). Functionally, catalyzes the attachment of tyrosine to tRNA(Tyr) in a two-step reaction: tyrosine is first activated by ATP to form Tyr-AMP and then transferred to the acceptor end of tRNA(Tyr). The sequence is that of Tyrosine--tRNA ligase from Levilactobacillus brevis (Lactobacillus brevis).